A 400-amino-acid chain; its full sequence is MERFDAIIIGAGAAGMFCSALAGQAGRRVLLIDNGKKPGRKILMSGGGRCNFTNLYVEPGAYLSQNPHFCKSALARFTQWDFIDLVNKHGIAWHEKTLGQLFCDDSAQQIVDMLVDECEKGNVTFRLRSEVLSVAKDETGFTLDLNGMTVGCEKLVIATGGLSMPGLGASPFGYKIAEQFGLNVLPTRAGLVPFTLHKPLLEELQVLAGVAVPSVITAENGTVFRENLLFTHRGLSGPAVLQISSYWQPGEFVSINLLPDVDLETFLNEQRNAHPNQSLKNTLAVHLPKRLVERLQQLGQIPDVSLKQLNVRDQQALISTLTDWRVQPNGTEGYRTAEVTLGGVDTNELSSRTMEARKVPGLYFIGEVMDVTGWLGGYNFQWAWSSAWACAQDLIAAKSS.

FAD-binding residues include alanine 14, aspartate 33, asparagine 34, arginine 40, glycine 46, asparagine 51, valine 131, glutamate 367, and phenylalanine 380.

This sequence belongs to the BaiN/RdsA family. RdsA subfamily. FAD serves as cofactor.

The enzyme catalyses a 5,6-dihydrouridine in mRNA + NAD(+) = a uridine in mRNA + NADH + H(+). In terms of biological role, catalyzes the synthesis of 5,6-dihydrouridine (D) at position 2449 in 23S rRNA. Can use NADH as a source of reducing equivalents but not NADPH. This chain is Ribosomal RNA dihydrouridine synthase, found in Escherichia coli (strain K12).